A 492-amino-acid chain; its full sequence is Catalase (492 aa).

Active-site residues include His65 and Asn138. Tyr348 is a binding site for heme.

It belongs to the catalase family. In terms of assembly, homotetramer. The cofactor is heme.

Its subcellular location is the cytoplasm. The protein localises to the cytosol. The protein resides in the peroxisome matrix. The enzyme catalyses 2 H2O2 = O2 + 2 H2O. Its function is as follows. Catalyzes the degradation of hydrogen peroxide (H(2)O(2)) generated by peroxisomal oxidases to water and oxygen, thereby protecting cells from the toxic effects of hydrogen peroxide. This Soldanella alpina (Alpine snowbell) protein is Catalase.